The primary structure comprises 535 residues: cAMP-regulated D2 protein (535 aa).

An N-terminal signal peptide occupies residues 1-20 (MNKLLVFILLLLLLINISFA). The cysteines at positions 89 and 109 are disulfide-linked. The Acyl-ester intermediate role is filled by S213. An intrachain disulfide couples C265 to C272. Catalysis depends on charge relay system residues E338 and H440. Residue N500 is glycosylated (N-linked (GlcNAc...) asparagine).

The protein belongs to the type-B carboxylesterase/lipase family.

The protein resides in the cytoplasmic vesicle. The protein localises to the esterosome membrane. The protein is cAMP-regulated D2 protein (D2) of Dictyostelium discoideum (Social amoeba).